Reading from the N-terminus, the 85-residue chain is UPF0386 protein RL2079 (85 aa).

The protein belongs to the UPF0386 family.

The polypeptide is UPF0386 protein RL2079 (Rhizobium johnstonii (strain DSM 114642 / LMG 32736 / 3841) (Rhizobium leguminosarum bv. viciae)).